A 101-amino-acid chain; its full sequence is NADH-quinone oxidoreductase subunit K (101 aa).

The next 3 helical transmembrane spans lie at 4–24, 29–49, and 61–81; these read LAHYLVLGAILFAMSIVGIFL, IIIILMAIELMLLAVNTNFVA, and IFVFFVLTVAAAEAAIGLAIL.

It belongs to the complex I subunit 4L family. NDH-1 is composed of 14 different subunits. Subunits NuoA, H, J, K, L, M, N constitute the membrane sector of the complex.

The protein resides in the cell inner membrane. The enzyme catalyses a quinone + NADH + 5 H(+)(in) = a quinol + NAD(+) + 4 H(+)(out). In terms of biological role, NDH-1 shuttles electrons from NADH, via FMN and iron-sulfur (Fe-S) centers, to quinones in the respiratory chain. The immediate electron acceptor for the enzyme in this species is believed to be ubiquinone. Couples the redox reaction to proton translocation (for every two electrons transferred, four hydrogen ions are translocated across the cytoplasmic membrane), and thus conserves the redox energy in a proton gradient. The polypeptide is NADH-quinone oxidoreductase subunit K (Burkholderia vietnamiensis (strain G4 / LMG 22486) (Burkholderia cepacia (strain R1808))).